The chain runs to 463 residues: Casein kinase 1 (463 aa).

The region spanning 9-278 (FKLGRKIGSG…LKRLFRDLFI (270 aa)) is the Protein kinase domain. Residues 15 to 23 (IGSGSFGEL) and Lys38 contribute to the ATP site. Asp128 functions as the Proton acceptor in the catalytic mechanism. A compositionally biased stretch (polar residues) spans 296 to 306 (ESNRLRSSGRT). The segment at 296–448 (ESNRLRSSGR…TARNVHDDPT (153 aa)) is disordered. Residues 315–328 (ERTERAAARQDVPD) show a composition bias toward basic and acidic residues. Composition is skewed to polar residues over residues 376 to 396 (TSSSRNGSTSRKALLSSSRPS) and 404 to 440 (NRSNLIPTSSGSSRPSTMQRLHQSTGLETRSSLTKTA).

Belongs to the protein kinase superfamily. CK1 Ser/Thr protein kinase family. Casein kinase I subfamily. As to quaternary structure, monomer. Autophosphorylated. As to expression, expressed in leaves, stems, panicles and seeds. Expressed in root tissues and lamina joints.

Its subcellular location is the cytoplasm. The protein resides in the nucleus. The enzyme catalyses L-seryl-[protein] + ATP = O-phospho-L-seryl-[protein] + ADP + H(+). It catalyses the reaction L-threonyl-[protein] + ATP = O-phospho-L-threonyl-[protein] + ADP + H(+). With respect to regulation, inhibited by N-(2-aminoethyl)-5-chloroisoquinoline-8-sulfonamide (CKI-7). In terms of biological role, casein kinases are operationally defined by their preferential utilization of acidic proteins such as caseins as substrates. Can phosphorylate casein in vitro. Required for normal root development through modulation of cell elongation. Plants silencing CKI1 show abnormal root development, with reduced number of lateral and adventitious roots, and shortened primary roots as a result of reduced cell elongation. May be involved in abscisic acid (ABA) and brassinosteroid (BR) signaling pathways. Plays an important role in the adaptive growth and fitness under low temperature (LT) conditions. May confer tolerance to LT through an auxin-dependent process. This chain is Casein kinase 1 (CKI1), found in Oryza sativa subsp. japonica (Rice).